The following is a 522-amino-acid chain: Amphoterin-induced protein 2 (522 aa).

An N-terminal signal peptide occupies residues 1 to 39; sequence MSLRVHTLPTLLGAVVRPGCRELLCLLMITVTVGPGASG. The LRRNT domain occupies 40–68; sequence VCPTACICATDIVSCTNKNLSKVPGNLFR. The Extracellular portion of the chain corresponds to 40-398; sequence VCPTACICAT…RSHAHEAFNT (359 aa). Intrachain disulfides connect Cys-41–Cys-47 and Cys-45–Cys-54. A glycan (N-linked (GlcNAc...) asparagine) is linked at Asn-58. LRR repeat units lie at residues 69–90, 94–115, 118–139, 142–163, 166–187, and 193–214; these read LIKR…WIPV, KLNT…SFST, NLKC…VFQE, VLEV…AFGG, QLQK…LYVG, and ELMF…HINL. Asn-104 is a glycosylation site (N-linked (GlcNAc...) asparagine). The LRRCT domain maps to 228-284; sequence NPFVCDCSLYSLLVFWYRRHFSSVMDFKNDYTCRLWSDSRHSRQVLLLQDSFMNCSD. Cystine bridges form between Cys-232/Cys-260 and Cys-234/Cys-282. 6 N-linked (GlcNAc...) asparagine glycosylation sites follow: Asn-281, Asn-288, Asn-345, Asn-373, Asn-381, and Asn-384. Residues 289–379 enclose the Ig-like C2-type domain; that stretch reads GSFRALGFIH…RLLNETVDVT (91 aa). An intrachain disulfide couples Cys-310 to Cys-363. Residues 399–419 form a helical membrane-spanning segment; it reads AFTTLAACVASIVLVLLYLYL. Topologically, residues 420-522 are cytoplasmic; it reads TPCPCKCKTK…FSDTPFVAST (103 aa). The tract at residues 501–522 is disordered; sequence RGKSDSDSVNSVFSDTPFVAST.

The protein belongs to the immunoglobulin superfamily. AMIGO family. Binds itself as well as AMIGO1 and AMIGO3. In terms of tissue distribution, highest levels in breast, ovary, cervix, and uterus. Lower levels in lung, colon, and rectum. Differentially expressed in 56% of thyroid, 57% of pancreatic and 45% of stomach cancers.

The protein localises to the cell membrane. Its subcellular location is the nucleus. Functionally, required for depolarization-dependent survival of cultured cerebellar granule neurons. May mediate homophilic as well as heterophilic cell-cell interaction with AMIGO1 or AMIGO3. May contribute to signal transduction through its intracellular domain. May be required for tumorigenesis of a subset of gastric adenocarcinomas. The sequence is that of Amphoterin-induced protein 2 from Homo sapiens (Human).